Here is a 420-residue protein sequence, read N- to C-terminus: MGMTMTQKILAAHASLDSVKAGDLIMADLDMVLANDITGPVAINVFGTIDKEKVFDKDKIALVPDHFAPAKDIKSAQQCKQVRCFACDQEITNYFEIGEMGIEHALLPEKGLVAAGDVVIGADSHTCTYGALGAFSTGVGSTDMAVGMATGKAWFKVPAALRFNLTGTLNKNVSGKDLILHIIGMIGVDGALYRSMEFTGPGVACLSMDDRFTISNMAIEAGGKNGIFPVDDQTISYMEEHGSGDYKVYAADADAVYEKTFDIDLSQLKSTVAFPHLPENTKTVDAIEEPVTIDQVVIGSCTNGRFEDLKRAADILRGKHVKKGVRMLVIPATHKIYLDAMEAGYLREFIEAGATISTPTCGPCLGGYMGILAEGERCVSTTNRNFVGRMGHVDSEVYLASPEVAAASAILGRIATPDEL.

Residues Cys-301, Cys-361, and Cys-364 each coordinate [4Fe-4S] cluster.

It belongs to the aconitase/IPM isomerase family. LeuC type 2 subfamily. In terms of assembly, heterodimer of a large and a small subunit. The cofactor is [4Fe-4S] cluster.

It carries out the reaction (2R,3S)-2,3-dimethylmalate = dimethylmaleate + H2O. The protein operates within cofactor degradation; nicotinate degradation; propanoate and pyruvate from 6-hydroxynicotinate: step 7/8. The chain is 2,3-dimethylmalate dehydratase large subunit (dmdA) from Eubacterium barkeri (Clostridium barkeri).